A 284-amino-acid polypeptide reads, in one-letter code: Bifunctional protein FolD 2 (284 aa).

NADP(+) is bound by residues 166–168 (GAS) and Ile-232.

The protein belongs to the tetrahydrofolate dehydrogenase/cyclohydrolase family. Homodimer.

It catalyses the reaction (6R)-5,10-methylene-5,6,7,8-tetrahydrofolate + NADP(+) = (6R)-5,10-methenyltetrahydrofolate + NADPH. It carries out the reaction (6R)-5,10-methenyltetrahydrofolate + H2O = (6R)-10-formyltetrahydrofolate + H(+). It functions in the pathway one-carbon metabolism; tetrahydrofolate interconversion. Its function is as follows. Catalyzes the oxidation of 5,10-methylenetetrahydrofolate to 5,10-methenyltetrahydrofolate and then the hydrolysis of 5,10-methenyltetrahydrofolate to 10-formyltetrahydrofolate. The polypeptide is Bifunctional protein FolD 2 (Pseudomonas putida (strain ATCC 47054 / DSM 6125 / CFBP 8728 / NCIMB 11950 / KT2440)).